The following is a 168-amino-acid chain: Photosystem I assembly protein Ycf3 (168 aa).

TPR repeat units lie at residues 35-68, 72-105, and 120-153; these read AFTY…EIDP, SYIL…NPFL, and GEQA…TPGN.

Belongs to the Ycf3 family. In terms of assembly, interacts with Y3IP1.

The protein resides in the plastid. It localises to the chloroplast thylakoid membrane. Essential for the assembly of the photosystem I (PSI) complex. May act as a chaperone-like factor to guide the assembly of the PSI subunits. This chain is Photosystem I assembly protein Ycf3, found in Arabidopsis thaliana (Mouse-ear cress).